The chain runs to 137 residues: Acetyltransferase Atu2258 (137 aa).

In terms of domain architecture, N-acetyltransferase spans Met1 to Phe137. Residues Leu66–Val68, Gly74, and Arg108–Tyr110 contribute to the CoA site.

Functionally, catalyzes the transfer of an acetyl group from acetyl coenzyme A (AcCoA) to an acceptor substrate and releases both CoA and the acetylated product. It prefers glucosamine 6-phosphate or dopamine. It can also use the thialysine, N(8)-acetylspermidine, chloramphenicol, puromycin, polymyxin B, and 4-aminobutyrate ethyl ester. The sequence is that of Acetyltransferase Atu2258 from Agrobacterium fabrum (strain C58 / ATCC 33970) (Agrobacterium tumefaciens (strain C58)).